Here is a 143-residue protein sequence, read N- to C-terminus: Peptide methionine sulfoxide reductase MsrB (143 aa).

The MsrB domain occupies Asp16–Arg139. Zn(2+)-binding residues include Cys55, Cys58, Cys104, and Cys107. Residue Cys128 is the Nucleophile of the active site.

It belongs to the MsrB Met sulfoxide reductase family. The cofactor is Zn(2+).

The enzyme catalyses L-methionyl-[protein] + [thioredoxin]-disulfide + H2O = L-methionyl-(R)-S-oxide-[protein] + [thioredoxin]-dithiol. This chain is Peptide methionine sulfoxide reductase MsrB, found in Burkholderia ambifaria (strain MC40-6).